Reading from the N-terminus, the 364-residue chain is Aminomethyltransferase (364 aa).

This sequence belongs to the GcvT family. As to quaternary structure, the glycine cleavage system is composed of four proteins: P, T, L and H.

It catalyses the reaction N(6)-[(R)-S(8)-aminomethyldihydrolipoyl]-L-lysyl-[protein] + (6S)-5,6,7,8-tetrahydrofolate = N(6)-[(R)-dihydrolipoyl]-L-lysyl-[protein] + (6R)-5,10-methylene-5,6,7,8-tetrahydrofolate + NH4(+). In terms of biological role, the glycine cleavage system catalyzes the degradation of glycine. The protein is Aminomethyltransferase of Salmonella paratyphi B (strain ATCC BAA-1250 / SPB7).